The following is a 294-amino-acid chain: N-acetylmuramic acid 6-phosphate etherase (294 aa).

Residues 54–217 (VIQSFEEEGR…STASMIGVGK (164 aa)) enclose the SIS domain. Catalysis depends on Glu82, which acts as the Proton donor. The active site involves Glu113.

Belongs to the GCKR-like family. MurNAc-6-P etherase subfamily. As to quaternary structure, homodimer.

The catalysed reaction is N-acetyl-D-muramate 6-phosphate + H2O = N-acetyl-D-glucosamine 6-phosphate + (R)-lactate. The protein operates within amino-sugar metabolism; N-acetylmuramate degradation. In terms of biological role, specifically catalyzes the cleavage of the D-lactyl ether substituent of MurNAc 6-phosphate, producing GlcNAc 6-phosphate and D-lactate. This Bacillus cereus (strain AH820) protein is N-acetylmuramic acid 6-phosphate etherase.